We begin with the raw amino-acid sequence, 109 residues long: MQQFEWVHGAWLALAIILEIAANVLLKFSDGFRRKCYGILSLAAVLAAFSALSQAVKGIDLSVAYALWGGFGIAATLAAGWVLFGQRLNPKGWVGVVLLLVGMIMIKLA.

4 helical membrane passes run Trp6–Leu26, Cys36–Val56, Ala64–Phe84, and Leu88–Leu108.

It belongs to the drug/metabolite transporter (DMT) superfamily. Small multidrug resistance (SMR) (TC 2.A.7.1) family. MdtI subfamily. In terms of assembly, forms a complex with MdtJ.

Its subcellular location is the cell inner membrane. Its function is as follows. Catalyzes the excretion of spermidine. The protein is Spermidine export protein MdtI of Salmonella arizonae (strain ATCC BAA-731 / CDC346-86 / RSK2980).